The following is a 385-amino-acid chain: 1-deoxy-D-xylulose 5-phosphate reductoisomerase (385 aa).

The NADPH site is built by Thr-10, Gly-11, Ser-12, Ile-13, Lys-37, and Asn-124. A 1-deoxy-D-xylulose 5-phosphate-binding site is contributed by Lys-125. Glu-126 serves as a coordination point for NADPH. Residue Asp-150 coordinates Mn(2+). 1-deoxy-D-xylulose 5-phosphate is bound by residues Ser-151, Glu-152, Ser-176, and His-199. Residue Glu-152 participates in Mn(2+) binding. Gly-205 contacts NADPH. The 1-deoxy-D-xylulose 5-phosphate site is built by Ser-212, Asn-217, Lys-218, and Glu-221. Mn(2+) is bound at residue Glu-221.

It belongs to the DXR family. Mg(2+) serves as cofactor. Requires Mn(2+) as cofactor.

The enzyme catalyses 2-C-methyl-D-erythritol 4-phosphate + NADP(+) = 1-deoxy-D-xylulose 5-phosphate + NADPH + H(+). Its pathway is isoprenoid biosynthesis; isopentenyl diphosphate biosynthesis via DXP pathway; isopentenyl diphosphate from 1-deoxy-D-xylulose 5-phosphate: step 1/6. Functionally, catalyzes the NADPH-dependent rearrangement and reduction of 1-deoxy-D-xylulose-5-phosphate (DXP) to 2-C-methyl-D-erythritol 4-phosphate (MEP). This chain is 1-deoxy-D-xylulose 5-phosphate reductoisomerase, found in Clostridium botulinum (strain ATCC 19397 / Type A).